The sequence spans 1451 residues: Murinoglobulin-2 (1451 aa).

A signal peptide spans 1–27; it reads MWKSRRAQLCLFSVLLAFLPSASSLNG. Disulfide bonds link Cys48/Cys86, Cys251/Cys276, and Cys269/Cys288. An N-linked (GlcNAc...) asparagine glycan is attached at Asn55. Asn294, Asn313, and Asn500 each carry an N-linked (GlcNAc...) asparagine glycan. 3 cysteine pairs are disulfide-bonded: Cys461–Cys555, Cys587–Cys773, and Cys634–Cys680. A bait region region spans residues 677–734; that stretch reads PKICFDSAPMSGPRGKFDLAFSSEVSGTLQKGSSKRPQPEEPPREDPPPKDPLAETIR. Residues 703–728 are disordered; it reads GTLQKGSSKRPQPEEPPREDPPPKDP. Residues 713–728 show a composition bias toward basic and acidic residues; it reads PQPEEPPREDPPPKDP. N-linked (GlcNAc...) asparagine glycans are attached at residues Asn749, Asn776, and Asn871. Disulfide bonds link Cys849/Cys885, Cys923/Cys1274, Cys1081/Cys1104, and Cys1298/Cys1444. The segment at residues 974–977 is a cross-link (isoglutamyl cysteine thioester (Cys-Gln)); it reads CGEQ. An N-linked (GlcNAc...) asparagine glycan is attached at Asn1401.

It belongs to the protease inhibitor I39 (alpha-2-macroglobulin) family. As to quaternary structure, monomer. Plasma.

It localises to the secreted. Its function is as follows. A proteinase activates the inhibitor by specific proteolysis in the bait region, which, by an unknown mechanism leads to reaction at the cysteinyl-glutamyl internal thiol ester site and to a conformational change, whereby the proteinase is trapped and/or covalently bound to the inhibitor. While in the tetrameric proteinase inhibitors steric inhibition is sufficiently strong, monomeric forms need a covalent linkage between the activated glutamyl residue of the original thiol ester and a terminal amino group of a lysine or another nucleophilic group on the proteinase, for inhibition to be effective. This chain is Murinoglobulin-2 (Mug2), found in Mus musculus (Mouse).